A 338-amino-acid polypeptide reads, in one-letter code: Ketol-acid reductoisomerase (NADP(+)) (338 aa).

A KARI N-terminal Rossmann domain is found at 1-181 (MNVYYDKDCD…GGGRSGIIET (181 aa)). NADP(+) contacts are provided by residues 24–27 (YGSQ), Arg47, Ser50, Ser52, and 82–85 (DEFQ). His107 is an active-site residue. Gly133 provides a ligand contact to NADP(+). Residues 182–327 (TFKDETETDL…AKLRSMMPWI (146 aa)) form the KARI C-terminal knotted domain. Residues Asp190, Glu194, Glu226, and Glu230 each contribute to the Mg(2+) site. Ser251 is a binding site for substrate.

The protein belongs to the ketol-acid reductoisomerase family. Mg(2+) serves as cofactor.

It catalyses the reaction (2R)-2,3-dihydroxy-3-methylbutanoate + NADP(+) = (2S)-2-acetolactate + NADPH + H(+). The enzyme catalyses (2R,3R)-2,3-dihydroxy-3-methylpentanoate + NADP(+) = (S)-2-ethyl-2-hydroxy-3-oxobutanoate + NADPH + H(+). It functions in the pathway amino-acid biosynthesis; L-isoleucine biosynthesis; L-isoleucine from 2-oxobutanoate: step 2/4. The protein operates within amino-acid biosynthesis; L-valine biosynthesis; L-valine from pyruvate: step 2/4. Its function is as follows. Involved in the biosynthesis of branched-chain amino acids (BCAA). Catalyzes an alkyl-migration followed by a ketol-acid reduction of (S)-2-acetolactate (S2AL) to yield (R)-2,3-dihydroxy-isovalerate. In the isomerase reaction, S2AL is rearranged via a Mg-dependent methyl migration to produce 3-hydroxy-3-methyl-2-ketobutyrate (HMKB). In the reductase reaction, this 2-ketoacid undergoes a metal-dependent reduction by NADPH to yield (R)-2,3-dihydroxy-isovalerate. This chain is Ketol-acid reductoisomerase (NADP(+)), found in Psychrobacter sp. (strain PRwf-1).